A 257-amino-acid polypeptide reads, in one-letter code: GTP cyclohydrolase FolE2 (257 aa).

It belongs to the GTP cyclohydrolase IV family.

It catalyses the reaction GTP + H2O = 7,8-dihydroneopterin 3'-triphosphate + formate + H(+). It participates in cofactor biosynthesis; 7,8-dihydroneopterin triphosphate biosynthesis; 7,8-dihydroneopterin triphosphate from GTP: step 1/1. Its function is as follows. Converts GTP to 7,8-dihydroneopterin triphosphate. In Pelobacter propionicus (strain DSM 2379 / NBRC 103807 / OttBd1), this protein is GTP cyclohydrolase FolE2.